Consider the following 1038-residue polypeptide: Rap guanine nucleotide exchange factor 1 (1038 aa).

10–140 (RLSPLHTFSD…DILTDETPSD (131 aa)) contacts a nucleoside 3',5'-cyclic phosphate. Residues 234 to 316 (TDNHQVIRDI…KTNSYYRWVQ (83 aa)) enclose the DEP domain. 375 to 492 (ALSHLSTMVK…VRLKDYGEDV (118 aa)) lines the a nucleoside 3',5'-cyclic phosphate pocket. One can recognise an N-terminal Ras-GEF domain in the interval 516-654 (CGYSVMAGKA…DILTRIGSIR (139 aa)). The Ras-GEF domain occupies 795–1028 (DSQELAHQLF…MQLSYEIEPK (234 aa)).

Interacts (via C-terminus) with drn-1. As to expression, expressed specifically in neurons including the nerve ring, ventral and dorsal nerve cord motor neurons and tail ganglia.

Functionally, guanine nucleotide-releasing protein. Together with GTPase drn-1, may regulate acetylcholine release at the neuromuscular junctions probably downstream of G-protein gsa-1 and adenylate cyclase acy-1. The chain is Rap guanine nucleotide exchange factor 1 (epac-1) from Caenorhabditis elegans.